Consider the following 147-residue polypeptide: Nitric oxide reductase subunit C (147 aa).

Residues 13–29 form a helical; Signal-anchor membrane-spanning segment; sequence VFYGGSLFFIAVFVGLT. The heme c site is built by Cys59, Cys62, and His63.

Heterodimer of cytochromes b (large subunit) and c (small subunit).

Its subcellular location is the cell membrane. Its function is as follows. Component of the anaerobic respiratory chain that transforms nitrate to dinitrogen (denitrification). The sequence is that of Nitric oxide reductase subunit C (norC) from Cereibacter sphaeroides (strain ATCC 17025 / ATH 2.4.3) (Rhodobacter sphaeroides).